We begin with the raw amino-acid sequence, 92 residues long: Beta-2-microglobulin (92 aa).

Positions 2–89 (PQIQVYSRHP…NHVSMDKPMT (88 aa)) constitute an Ig-like C1-type domain. A disulfide bond links Cys22 and Cys77.

The protein belongs to the beta-2-microglobulin family. Heterodimer of an alpha chain and a beta chain. Beta-2-microglobulin is the beta-chain of major histocompatibility complex class I molecules.

It localises to the secreted. Component of the class I major histocompatibility complex (MHC). Involved in the presentation of peptide antigens to the immune system. This chain is Beta-2-microglobulin (B2m), found in Mus spretus (Western Mediterranean mouse).